We begin with the raw amino-acid sequence, 148 residues long: Large ribosomal subunit protein bL9 (148 aa).

It belongs to the bacterial ribosomal protein bL9 family.

Its function is as follows. Binds to the 23S rRNA. This chain is Large ribosomal subunit protein bL9, found in Oceanobacillus iheyensis (strain DSM 14371 / CIP 107618 / JCM 11309 / KCTC 3954 / HTE831).